The sequence spans 105 residues: Large ribosomal subunit protein uL24 (105 aa).

It belongs to the universal ribosomal protein uL24 family. As to quaternary structure, part of the 50S ribosomal subunit.

One of two assembly initiator proteins, it binds directly to the 5'-end of the 23S rRNA, where it nucleates assembly of the 50S subunit. In terms of biological role, one of the proteins that surrounds the polypeptide exit tunnel on the outside of the subunit. The chain is Large ribosomal subunit protein uL24 from Beijerinckia indica subsp. indica (strain ATCC 9039 / DSM 1715 / NCIMB 8712).